The primary structure comprises 265 residues: Bradykinin-potentiating and C-type natriuretic peptides (265 aa).

The N-terminal stretch at 1–23 is a signal peptide; the sequence is MVLSRLAASGLLLLALLALSVDG. Positions 24–30 are excised as a propeptide; that stretch reads KPVQQWA. Position 31 is a pyrrolidone carboxylic acid (Gln31). Positions 44–50 are excised as a propeptide; it reads LKVQQWA. Gln51 carries the pyrrolidone carboxylic acid modification. A propeptide spanning residues 64–70 is cleaved from the precursor; the sequence is LTVQQWA. Pyrrolidone carboxylic acid is present on Gln71. Residues 81–87 constitute a propeptide that is removed on maturation; sequence LTVQQWA. A Pyrrolidone carboxylic acid modification is found at Gln88. Residues 100–106 constitute a propeptide that is removed on maturation; it reads LEVQQWA. Gln107 carries the post-translational modification Pyrrolidone carboxylic acid. A propeptide spanning residues 118-120 is cleaved from the precursor; that stretch reads APL. Pyrrolidone carboxylic acid is present on Gln121. Val126 is a propeptide. Gln127 carries the post-translational modification Pyrrolidone carboxylic acid. A propeptide spanning residues 132–241 is cleaved from the precursor; it reads LLQPHESPAS…GGARRLKGLA (110 aa). The disordered stretch occupies residues 153 to 211; the sequence is GPEAASGVPSAGAEVGRSGSKAPAAPHRLSKSKGAAATSAASRPMRDLRPDGKQARQNW. The segment covering 184–194 has biased composition (low complexity); that stretch reads SKGAAATSAAS. Over residues 196 to 206 the composition is skewed to basic and acidic residues; it reads PMRDLRPDGKQ. Cys249 and Cys265 form a disulfide bridge.

In the N-terminal section; belongs to the bradykinin-potentiating peptide family. The protein in the C-terminal section; belongs to the natriuretic peptide family. Expressed by the venom gland.

The protein localises to the secreted. The protein resides in the cytoplasm. It localises to the cytosol. In terms of biological role, modestly inhibits ACE (with highest affinity for the N-site) and reveals strong bradykinin-potentiating activity. Induces nitric oxide (NO) production depended on muscarinic acetylcholine receptor M1 subtype (CHRM1) and bradykinin B2 receptor (BDKRB2) activation. Both these receptors contribute to the vasodilation induced by this peptide that may have an indirect action on BDKRB2 and a direct agonistic action on CHRM1. Peptide with several activities. It inhibits the activity of the angiotensin-converting enzyme (ACE) by a preferential interaction with its C-domain. It evokes transient hypotension (-14 mmHg) similar to that evoked by 0.5 ug of bradykinin, when injected alone into rats. It has a high bradykinin-potentiating effect (120%), when 60 nmol of BPP-10c are coinjected with 0.5 ug of bradykinin into rats. Does not affect angiotensin-1 pressor effects. Shows potent and long-lasting antihypertensive activity as well as a reduction of the heart rate. It also binds and dose-dependently promotes the activation of cytosolic argininosuccinate synthase (ASS1), an enzyme that catalyzes the conversion of citrulline, L-aspartate and ATP to argininosuccinate, AMP and pyrophosphate. It also enhances ASS1-dependent arginine production in HEK 293 cells, as well as in spontaneous hypertensive rat (SHR) and Wistar rat plasma. In addition, it induces the production of nitric-oxide (NO) by HUVEC cells via the endothelial nitric-oxide synthase (NOS3), which use arginine as a substrate and produce NO. It has been shown to be internalized by ASS1-expressing endothelial (HUVEC) and kidney (HEK 293) cells, and is detected homogenously distributed within the cell cytoplasm for up to 2 hours. Its function is as follows. has a vasorelaxant activity in rat aortic strips and a diuretic potency in anesthetized rats. May act by activating natriuretic receptors (NPR1 and/or NPR2). In Bothrops insularis (Golden lancehead), this protein is Bradykinin-potentiating and C-type natriuretic peptides.